The sequence spans 228 residues: Calcyclin-binding protein (228 aa).

M1 carries the N-acetylmethionine modification. Position 2 is an N-acetylalanine (A2). Residues 2 to 80 (ASEELQKDLE…YTVKISNYGW (79 aa)) form an interaction with SIAH1 region. Phosphoserine is present on S3. N6-acetyllysine is present on residues K8 and K19. S34 carries the post-translational modification Phosphoserine. One can recognise a CS domain in the interval 73-167 (VKISNYGWDQ…VENTRWDYLT (95 aa)). Residues 73 to 228 (VKISNYGWDQ…EKQAKGDTEF (156 aa)) are interaction with SKP1. N6-acetyllysine is present on residues K85 and K118. The segment at 154–228 (CRKKVENTRW…EKQAKGDTEF (75 aa)) is interaction with S100A6. Residues 168-228 (QVEKECKEKE…EKQAKGDTEF (61 aa)) enclose the SGS domain.

In terms of assembly, homodimer. Interacts with proteins of the S100 family S100A1, S100A6, S100B, S100P and S100A12 in a calcium-dependent manner. Component of some large E3 complex at least composed of UBE2D1, SIAH1, CACYBP/SIP, SKP1, APC and TBL1X. Interacts directly with SIAH1, SIAH2 and SKP1. In terms of processing, phosphorylated on serine residues. Phosphorylated upon induction by RA or at high calcium concentrations.

The protein resides in the nucleus. Its subcellular location is the cytoplasm. Its function is as follows. May be involved in calcium-dependent ubiquitination and subsequent proteasomal degradation of target proteins. Probably serves as a molecular bridge in ubiquitin E3 complexes. Participates in the ubiquitin-mediated degradation of beta-catenin (CTNNB1). This chain is Calcyclin-binding protein (CACYBP), found in Homo sapiens (Human).